Here is a 252-residue protein sequence, read N- to C-terminus: Ubiquinone biosynthesis O-methyltransferase (252 aa).

S-adenosyl-L-methionine contacts are provided by R45, G76, D97, and M141.

It belongs to the methyltransferase superfamily. UbiG/COQ3 family.

It carries out the reaction a 3-demethylubiquinol + S-adenosyl-L-methionine = a ubiquinol + S-adenosyl-L-homocysteine + H(+). The enzyme catalyses a 3-(all-trans-polyprenyl)benzene-1,2-diol + S-adenosyl-L-methionine = a 2-methoxy-6-(all-trans-polyprenyl)phenol + S-adenosyl-L-homocysteine + H(+). It functions in the pathway cofactor biosynthesis; ubiquinone biosynthesis. Its function is as follows. O-methyltransferase that catalyzes the 2 O-methylation steps in the ubiquinone biosynthetic pathway. The chain is Ubiquinone biosynthesis O-methyltransferase from Caulobacter sp. (strain K31).